The chain runs to 556 residues: tRNA (guanine(37)-N(1))-methyltransferase (556 aa).

The transit peptide at 1–30 (MIITTKALTVLPHSGLRTTHRSLLARLRHY) directs the protein to the mitochondrion. Residues His-249, 287 to 288 (DL), 315 to 316 (DA), and Asn-346 each bind S-adenosyl-L-methionine. 2 disordered regions span residues 444–465 (QHEE…KMKD) and 524–556 (KKAA…EMQM). Composition is skewed to basic and acidic residues over residues 454–465 (EEAKRPSNKMKD) and 540–549 (SKPDTKKIEA).

This sequence belongs to the class I-like SAM-binding methyltransferase superfamily. TRM5/TYW2 family. In terms of assembly, monomer.

It localises to the mitochondrion matrix. The protein localises to the nucleus. The protein resides in the cytoplasm. It catalyses the reaction guanosine(37) in tRNA + S-adenosyl-L-methionine = N(1)-methylguanosine(37) in tRNA + S-adenosyl-L-homocysteine + H(+). Its function is as follows. Specifically methylates the N1 position of guanosine-37 in various cytoplasmic and mitochondrial tRNAs. Methylation is not dependent on the nature of the nucleoside 5' of the target nucleoside. This is the first step in the biosynthesis of wybutosine (yW), a modified base adjacent to the anticodon of tRNAs and required for accurate decoding. The polypeptide is tRNA (guanine(37)-N(1))-methyltransferase (Anopheles gambiae (African malaria mosquito)).